Reading from the N-terminus, the 445-residue chain is Chromosomal replication initiator protein DnaA (445 aa).

Residues 1-69 (MEKIWLEAQS…IEAISSLTNI (69 aa)) form a domain I, interacts with DnaA modulators region. The tract at residues 69 to 108 (IKYQVDFKITEKSQVEKKKVDLQATEKIENDSTRNVDFNT) is domain II. A domain III, AAA+ region region spans residues 109–325 (NLNPKYTFDS…GMLIRLGAYA (217 aa)). Gly153, Gly155, Lys156, and Thr157 together coordinate ATP. Residues 326-445 (SLTGSEISLN…VEKMKKELMS (120 aa)) are domain IV, binds dsDNA.

It belongs to the DnaA family. Oligomerizes as a right-handed, spiral filament on DNA at oriC.

It is found in the cytoplasm. Plays an essential role in the initiation and regulation of chromosomal replication. ATP-DnaA binds to the origin of replication (oriC) to initiate formation of the DNA replication initiation complex once per cell cycle. Binds the DnaA box (a 9 base pair repeat at the origin) and separates the double-stranded (ds)DNA. Forms a right-handed helical filament on oriC DNA; dsDNA binds to the exterior of the filament while single-stranded (ss)DNA is stabiized in the filament's interior. The ATP-DnaA-oriC complex binds and stabilizes one strand of the AT-rich DNA unwinding element (DUE), permitting loading of DNA polymerase. After initiation quickly degrades to an ADP-DnaA complex that is not apt for DNA replication. Binds acidic phospholipids. The sequence is that of Chromosomal replication initiator protein DnaA from Geotalea daltonii (strain DSM 22248 / JCM 15807 / FRC-32) (Geobacter daltonii).